Here is a 435-residue protein sequence, read N- to C-terminus: Protein translocase subunit SecY (435 aa).

A run of 10 helical transmembrane segments spans residues 19-39 (ILFT…TVPG), 68-88 (FSVF…VQLL), 116-136 (YIAL…FDTL), 147-167 (VQTY…VTWL), 179-199 (GVSM…IKGI), 216-236 (FIFV…TTFV), 269-289 (VIPV…FQVV), 311-331 (ISGM…YTFV), 372-392 (VGSL…DVFG), and 395-415 (DAVA…IEGM).

This sequence belongs to the SecY/SEC61-alpha family. As to quaternary structure, component of the Sec protein translocase complex. Heterotrimer consisting of SecY, SecE and SecG subunits. The heterotrimers can form oligomers, although 1 heterotrimer is thought to be able to translocate proteins. Interacts with the ribosome. Interacts with SecDF, and other proteins may be involved. Interacts with SecA.

It is found in the cell membrane. The central subunit of the protein translocation channel SecYEG. Consists of two halves formed by TMs 1-5 and 6-10. These two domains form a lateral gate at the front which open onto the bilayer between TMs 2 and 7, and are clamped together by SecE at the back. The channel is closed by both a pore ring composed of hydrophobic SecY resides and a short helix (helix 2A) on the extracellular side of the membrane which forms a plug. The plug probably moves laterally to allow the channel to open. The ring and the pore may move independently. This chain is Protein translocase subunit SecY, found in Streptococcus sanguinis (strain SK36).